Consider the following 301-residue polypeptide: Porphobilinogen deaminase (301 aa).

Position 240 is an S-(dipyrrolylmethanemethyl)cysteine (Cys240).

It belongs to the HMBS family. In terms of assembly, monomer. Requires dipyrromethane as cofactor.

It carries out the reaction 4 porphobilinogen + H2O = hydroxymethylbilane + 4 NH4(+). It functions in the pathway porphyrin-containing compound metabolism; protoporphyrin-IX biosynthesis; coproporphyrinogen-III from 5-aminolevulinate: step 2/4. Tetrapolymerization of the monopyrrole PBG into the hydroxymethylbilane pre-uroporphyrinogen in several discrete steps. This chain is Porphobilinogen deaminase, found in Clostridioides difficile (strain 630) (Peptoclostridium difficile).